The sequence spans 273 residues: Large ribosomal subunit protein uL2 (273 aa).

The interval 228-273 is disordered; sequence IDHPHGGGEGKTSGGRHPVTPWGFSTKGKKTRKNKRTSKFIVKKRK. Residues 254-273 show a composition bias toward basic residues; the sequence is KGKKTRKNKRTSKFIVKKRK.

The protein belongs to the universal ribosomal protein uL2 family. As to quaternary structure, part of the 50S ribosomal subunit. Forms a bridge to the 30S subunit in the 70S ribosome.

In terms of biological role, one of the primary rRNA binding proteins. Required for association of the 30S and 50S subunits to form the 70S ribosome, for tRNA binding and peptide bond formation. It has been suggested to have peptidyltransferase activity; this is somewhat controversial. Makes several contacts with the 16S rRNA in the 70S ribosome. The sequence is that of Large ribosomal subunit protein uL2 from Rickettsia typhi (strain ATCC VR-144 / Wilmington).